Consider the following 384-residue polypeptide: Probable endopolygalacturonase C (384 aa).

The N-terminal stretch at 1–19 is a signal peptide; it reads MVRQLALACGLLAAVAVQA. A propeptide spanning residues 20–40 is cleaved from the precursor; the sequence is APAEPAHPMVTEAPDASLLHK. The cysteines at positions 45 and 63 are disulfide-linked. 2 PbH1 repeats span residues 176-207 and 208-229; these read ATDL…DIGE and STDI…AINS. The active-site Proton donor is the Asp-222. Cys-224 and Cys-240 form a disulfide bridge. Residue His-244 is part of the active site. 2 PbH1 repeats span residues 254–280 and 288–310; these read RDDN…RIKA and ISDI…VIEQ. Residue Asn-261 is glycosylated (N-linked (GlcNAc...) asparagine). Intrachain disulfides connect Cys-349–Cys-354 and Cys-373–Cys-382.

Belongs to the glycosyl hydrolase 28 family.

Its subcellular location is the secreted. The catalysed reaction is (1,4-alpha-D-galacturonosyl)n+m + H2O = (1,4-alpha-D-galacturonosyl)n + (1,4-alpha-D-galacturonosyl)m.. Involved in maceration and soft-rotting of plant tissue. Hydrolyzes the 1,4-alpha glycosidic bonds of de-esterified pectate in the smooth region of the plant cell wall. The polypeptide is Probable endopolygalacturonase C (pgaC) (Aspergillus aculeatus).